A 447-amino-acid chain; its full sequence is Ribulose bisphosphate carboxylase large chain (447 aa).

Residues asparagine 89 and threonine 139 each contribute to the substrate site. Residue lysine 141 is the Proton acceptor of the active site. Lysine 143 provides a ligand contact to substrate. Residues lysine 167, aspartate 169, and glutamate 170 each coordinate Mg(2+). Lysine 167 is subject to N6-carboxylysine. Catalysis depends on histidine 260, which acts as the Proton acceptor. Substrate-binding residues include arginine 261, histidine 293, and serine 345.

Belongs to the RuBisCO large chain family. Type I subfamily. Heterohexadecamer of 8 large chains and 8 small chains; disulfide-linked. The disulfide link is formed within the large subunit homodimers. Mg(2+) serves as cofactor. Post-translationally, the disulfide bond which can form in the large chain dimeric partners within the hexadecamer appears to be associated with oxidative stress and protein turnover.

The protein resides in the plastid. It localises to the chloroplast. The enzyme catalyses 2 (2R)-3-phosphoglycerate + 2 H(+) = D-ribulose 1,5-bisphosphate + CO2 + H2O. The catalysed reaction is D-ribulose 1,5-bisphosphate + O2 = 2-phosphoglycolate + (2R)-3-phosphoglycerate + 2 H(+). Its function is as follows. RuBisCO catalyzes two reactions: the carboxylation of D-ribulose 1,5-bisphosphate, the primary event in carbon dioxide fixation, as well as the oxidative fragmentation of the pentose substrate in the photorespiration process. Both reactions occur simultaneously and in competition at the same active site. The chain is Ribulose bisphosphate carboxylase large chain from Convolvulus tricolor (Dwarf morning glory).